Reading from the N-terminus, the 208-residue chain is Riboflavin synthase (208 aa).

Lumazine-binding repeat units lie at residues 1–97 (MFTG…MGGH) and 98–195 (FVQG…EKLV). Residues 4-6 (GLV), 48-50 (CLT), 62-67 (GIAPES), 101-103 (GHV), K137, 146-148 (SLT), and 160-165 (MMISYT) each bind 2,4-dihydroxypteridine.

In terms of assembly, homotrimer.

The catalysed reaction is 2 6,7-dimethyl-8-(1-D-ribityl)lumazine + H(+) = 5-amino-6-(D-ribitylamino)uracil + riboflavin. The protein operates within cofactor biosynthesis; riboflavin biosynthesis; riboflavin from 2-hydroxy-3-oxobutyl phosphate and 5-amino-6-(D-ribitylamino)uracil: step 2/2. Its function is as follows. Catalyzes the dismutation of two molecules of 6,7-dimethyl-8-ribityllumazine, resulting in the formation of riboflavin and 5-amino-6-(D-ribitylamino)uracil. The protein is Riboflavin synthase (rib5) of Schizosaccharomyces pombe (strain 972 / ATCC 24843) (Fission yeast).